We begin with the raw amino-acid sequence, 225 residues long: Ribose-5-phosphate isomerase A (225 aa).

Residues 27 to 30 (SGST), 82 to 85 (DGAD), and 95 to 98 (KGGG) each bind substrate. The Proton acceptor role is filled by glutamate 104. Residue lysine 122 coordinates substrate.

Belongs to the ribose 5-phosphate isomerase family. In terms of assembly, homodimer.

The catalysed reaction is aldehydo-D-ribose 5-phosphate = D-ribulose 5-phosphate. It functions in the pathway carbohydrate degradation; pentose phosphate pathway; D-ribose 5-phosphate from D-ribulose 5-phosphate (non-oxidative stage): step 1/1. In terms of biological role, catalyzes the reversible conversion of ribose-5-phosphate to ribulose 5-phosphate. The chain is Ribose-5-phosphate isomerase A from Archaeoglobus fulgidus (strain ATCC 49558 / DSM 4304 / JCM 9628 / NBRC 100126 / VC-16).